A 333-amino-acid chain; its full sequence is ADP-L-glycero-D-manno-heptose-6-epimerase (333 aa).

Residues 11–12 (FI), 32–33 (DN), Lys-39, Lys-54, 76–80 (QGACS), and Asn-93 each bind NADP(+). The active-site Proton acceptor is the Tyr-140. NADP(+) is bound at residue Lys-144. Residue Asn-170 coordinates substrate. Residues Val-171 and Lys-179 each contribute to the NADP(+) site. Lys-179 functions as the Proton acceptor in the catalytic mechanism. Residues Arg-181, His-188, 202-205 (FGGW), Arg-215, and Tyr-294 contribute to the substrate site.

This sequence belongs to the NAD(P)-dependent epimerase/dehydratase family. HldD subfamily. In terms of assembly, homopentamer. NADP(+) serves as cofactor.

The catalysed reaction is ADP-D-glycero-beta-D-manno-heptose = ADP-L-glycero-beta-D-manno-heptose. Its pathway is nucleotide-sugar biosynthesis; ADP-L-glycero-beta-D-manno-heptose biosynthesis; ADP-L-glycero-beta-D-manno-heptose from D-glycero-beta-D-manno-heptose 7-phosphate: step 4/4. It functions in the pathway bacterial outer membrane biogenesis; LPS core biosynthesis. Catalyzes the interconversion between ADP-D-glycero-beta-D-manno-heptose and ADP-L-glycero-beta-D-manno-heptose via an epimerization at carbon 6 of the heptose. The chain is ADP-L-glycero-D-manno-heptose-6-epimerase from Chromobacterium violaceum (strain ATCC 12472 / DSM 30191 / JCM 1249 / CCUG 213 / NBRC 12614 / NCIMB 9131 / NCTC 9757 / MK).